Reading from the N-terminus, the 261-residue chain is N-acetyltransferase ECO1 (261 aa).

The segment at 29–53 adopts a CCHH-type zinc-finger fold; sequence LKCPKCEMKYSPNSIDDVATHKKYH. The region spanning 102–261 is the N-acetyltransferase domain; sequence VMIQENKPAE…SGHILIPCYL (160 aa).

It belongs to the acetyltransferase family. ECO subfamily.

The protein localises to the nucleus. In terms of biological role, probable acetyltransferase required for the establishment of sister chromatid cohesion and couple the processes of cohesion and DNA replication to ensure that only sister chromatids become paired together. In contrast to the structural cohesins, the deposition and establishment factors are required only during S phase. Acts by acetylating the cohesin complex component SMC3. The protein is N-acetyltransferase ECO1 (ECO1) of Candida glabrata (strain ATCC 2001 / BCRC 20586 / JCM 3761 / NBRC 0622 / NRRL Y-65 / CBS 138) (Yeast).